Here is a 5101-residue protein sequence, read N- to C-terminus: Malformin synthetase mlfA (5101 aa).

An adenylation 1 region spans residues 225-616; it reads ERHAANRPHS…CGRADTQVKL (392 aa). The region spanning 757–830 is the Carrier 1 domain; the sequence is SRLEQKIQLA…EAASLAEVQE (74 aa). Serine 791 is subject to O-(pantetheine 4'-phosphoryl)serine. Residues 868 to 1299 form a condensation 1 region; that stretch reads EDVFPCTTMQ…ALNTLSLLQA (432 aa). Positions 1327 to 1716 are adenylation 2; sequence DRWVTRQPEG…GRKDTQVKLR (390 aa). Residues 1854 to 1931 form the Carrier 2 domain; the sequence is TPTLELERTL…QLAAEVGEPA (78 aa). Serine 1891 is modified (O-(pantetheine 4'-phosphoryl)serine). Disordered stretches follow at residues 1932–1961 and 1994–2020; these read GQSASSASSTTEEGFTFSTPDDSSTNDGVD and GGSSSNKTPSVSSSSSSSSSSKRKKNA. Low complexity-rich tracts occupy residues 1934–1958 and 1996–2013; these read SASSASSTTEEGFTFSTPDDSSTND and SSSNKTPSVSSSSSSSSS. The segment at 2066-2481 is condensation 2; that stretch reads EDIYPATALQ…AVSCSDKETL (416 aa). The interval 2504–2896 is adenylation 3; it reads RRTPHAPAVC…IGRRDGQLKL (393 aa). The 77-residue stretch at 3032-3108 folds into the Carrier 3 domain; sequence RPVTSQEHEM…QLICHLNTIR (77 aa). At serine 3069 the chain carries O-(pantetheine 4'-phosphoryl)serine. 2 condensation regions span residues 3125 to 3590 and 3611 to 4030; these read WVAL…TYDQ and NIYP…EHLV. The interval 4055–4445 is adenylation 4; it reads HNSRQAVCAW…VGRKDNQIKF (391 aa). Residues 4579–4655 form the Carrier 4 domain; it reads MPSTAAERKM…DLSDQAKSLI (77 aa). Position 4616 is an O-(pantetheine 4'-phosphoryl)serine (serine 4616). The interval 4712 to 5097 is condensation 5; that stretch reads IVVDIPGPID…KIVGLLRHPE (386 aa).

This sequence belongs to the NRP synthetase family.

It functions in the pathway secondary metabolite biosynthesis. In terms of biological role, nonribosomal peptide synthetase; part of the gene cluster that mediates the biosynthesis of malformins, cyclic pentapeptides with a disulfide bond between 2 consecutive cysteins, that show potential anti-tumor as well as antimalarial and antitrypanosomal properties. The nonribosomal peptide synthetase mlfA is responsible of the formation of the cyclic pentapeptide. The malformin biosynthesis clusters in malformin-producing fungi also contain enzymes involved in the formation of the disulfide bond between the two consecutive cysteins within malformins, in addition to additional tailoring enzymes such as methyltransferases or oxidoreductases. They are also composed of up to 4 major facilitator superfamily transporters, and transcription factors probably involved in the regulation of the expression of those clusters. In Aspergillus kawachii (strain NBRC 4308) (White koji mold), this protein is Malformin synthetase mlfA.